Consider the following 228-residue polypeptide: 2,3-bisphosphoglycerate-dependent phosphoglycerate mutase (228 aa).

Substrate is bound by residues 8 to 15 (RHGQSVWN), 21 to 22 (SG), Arg58, 111 to 114 (ERMY), Lys122, 138 to 139 (RR), and 182 to 183 (GN). The active-site Tele-phosphohistidine intermediate is His9. The active-site Proton donor/acceptor is Glu111.

Belongs to the phosphoglycerate mutase family. BPG-dependent PGAM subfamily.

It carries out the reaction (2R)-2-phosphoglycerate = (2R)-3-phosphoglycerate. It functions in the pathway carbohydrate degradation; glycolysis; pyruvate from D-glyceraldehyde 3-phosphate: step 3/5. Its function is as follows. Catalyzes the interconversion of 2-phosphoglycerate and 3-phosphoglycerate. This chain is 2,3-bisphosphoglycerate-dependent phosphoglycerate mutase, found in Chlamydia pneumoniae (Chlamydophila pneumoniae).